A 131-amino-acid polypeptide reads, in one-letter code: Histone H3-like 4 (131 aa).

Lys10 bears the N6,N6,N6-trimethyllysine; alternate mark. Lys10 is subject to N6,N6-dimethyllysine; alternate. Position 10 is an N6-acetyllysine; alternate (Lys10). Residue Lys10 is modified to N6-methyllysine; alternate. Thr12 carries the post-translational modification Phosphothreonine. Lys15 bears the N6-acetyllysine mark. Position 27 is a phosphoserine (Ser27). The residue at position 32 (Lys32) is an N6,N6,N6-trimethyllysine; alternate. Lys32 is modified (N6,N6-dimethyllysine; alternate). At Lys32 the chain carries N6-methyllysine; alternate.

This sequence belongs to the histone H3 family. In terms of assembly, the nucleosome is a histone octamer containing two molecules each of H2A, H2B, H3 and H4 assembled in one H3-H4 heterotetramer and two H2A-H2B heterodimers. The octamer wraps approximately 147 bp of DNA. In terms of tissue distribution, expressed in roots, seedlings, leaves buds and open flowers.

It is found in the nucleus. The protein localises to the chromosome. Core component of nucleosome. Nucleosomes wrap and compact DNA into chromatin, limiting DNA accessibility to the cellular machineries which require DNA as a template. Histones thereby play a central role in transcription regulation, DNA repair, DNA replication and chromosomal stability. DNA accessibility is regulated via a complex set of post-translational modifications of histones, also called histone code, and nucleosome remodeling. This Arabidopsis thaliana (Mouse-ear cress) protein is Histone H3-like 4.